Here is a 199-residue protein sequence, read N- to C-terminus: Holliday junction branch migration complex subunit RuvA (199 aa).

The tract at residues methionine 1–threonine 63 is domain I. The domain II stretch occupies residues threonine 64–alanine 142. The segment at glycine 143–leucine 153 is flexible linker. Residues leucine 153–proline 199 are domain III.

The protein belongs to the RuvA family. Homotetramer. Forms an RuvA(8)-RuvB(12)-Holliday junction (HJ) complex. HJ DNA is sandwiched between 2 RuvA tetramers; dsDNA enters through RuvA and exits via RuvB. An RuvB hexamer assembles on each DNA strand where it exits the tetramer. Each RuvB hexamer is contacted by two RuvA subunits (via domain III) on 2 adjacent RuvB subunits; this complex drives branch migration. In the full resolvosome a probable DNA-RuvA(4)-RuvB(12)-RuvC(2) complex forms which resolves the HJ.

It is found in the cytoplasm. Its function is as follows. The RuvA-RuvB-RuvC complex processes Holliday junction (HJ) DNA during genetic recombination and DNA repair, while the RuvA-RuvB complex plays an important role in the rescue of blocked DNA replication forks via replication fork reversal (RFR). RuvA specifically binds to HJ cruciform DNA, conferring on it an open structure. The RuvB hexamer acts as an ATP-dependent pump, pulling dsDNA into and through the RuvAB complex. HJ branch migration allows RuvC to scan DNA until it finds its consensus sequence, where it cleaves and resolves the cruciform DNA. The polypeptide is Holliday junction branch migration complex subunit RuvA (Shouchella clausii (strain KSM-K16) (Alkalihalobacillus clausii)).